Here is a 365-residue protein sequence, read N- to C-terminus: MTENHYLLLTPGPLTTTKTVKEVMLYDWCTWDVEYNMMVQKVRAKLVSLATKEEEKYTTVLMQGSGTFSVEAVIGSVIPKNGKLLVCTNGAYGKRIVQMAEMLHIDVVVSQTEEWEPTNIVEVEKILQQDKEITHIAVVHCETTTGIINPIVDVCKLGKQYGKVTLVDAMSSFGGIEIDIAELEIDFLISSANKCIQGVPGFGFVIAQRDELLKCKGQARSLSLDLYDQWETMENQNGKWRFTSPTHVVHAFYQALLELEKEGGVRARYNRYYNNQKLLVNRMGEIGFKPLVNEKYQSPIITSFIYPEGNFEFQQLYNELKRYGFVIYPGKISKVDTFRIGNIGDVHEEDINRLVDSIAKGVVIG.

Lys-194 is subject to N6-(pyridoxal phosphate)lysine.

It belongs to the class-V pyridoxal-phosphate-dependent aminotransferase family. PhnW subfamily. As to quaternary structure, homodimer. Requires pyridoxal 5'-phosphate as cofactor.

It catalyses the reaction (2-aminoethyl)phosphonate + pyruvate = phosphonoacetaldehyde + L-alanine. Functionally, involved in phosphonate degradation. This is 2-aminoethylphosphonate--pyruvate transaminase from Bacillus thuringiensis (strain Al Hakam).